Here is a 451-residue protein sequence, read N- to C-terminus: Bifunctional protein GlmU (451 aa).

The segment at 1–229 (MQRHAIILAA…FDEIIGVNDR (229 aa)) is pyrophosphorylase. UDP-N-acetyl-alpha-D-glucosamine contacts are provided by residues 8–11 (LAAG), lysine 22, glutamine 72, and 77–78 (GT). Mg(2+) is bound at residue aspartate 102. Residues glycine 139, glutamate 154, and asparagine 227 each contribute to the UDP-N-acetyl-alpha-D-glucosamine site. Residue asparagine 227 participates in Mg(2+) binding. The interval 230 to 250 (LMLSEAEKALQQRINRYHMEN) is linker. The interval 251–451 (GVTIIDPSST…QVNKEGYLKK (201 aa)) is N-acetyltransferase. UDP-N-acetyl-alpha-D-glucosamine contacts are provided by arginine 332 and lysine 350. Histidine 362 serves as the catalytic Proton acceptor. Positions 365 and 376 each coordinate UDP-N-acetyl-alpha-D-glucosamine. Acetyl-CoA is bound by residues 385–386 (NY), alanine 422, and arginine 439.

The protein in the N-terminal section; belongs to the N-acetylglucosamine-1-phosphate uridyltransferase family. In the C-terminal section; belongs to the transferase hexapeptide repeat family. Homotrimer. Mg(2+) serves as cofactor.

It is found in the cytoplasm. The enzyme catalyses alpha-D-glucosamine 1-phosphate + acetyl-CoA = N-acetyl-alpha-D-glucosamine 1-phosphate + CoA + H(+). It catalyses the reaction N-acetyl-alpha-D-glucosamine 1-phosphate + UTP + H(+) = UDP-N-acetyl-alpha-D-glucosamine + diphosphate. The protein operates within nucleotide-sugar biosynthesis; UDP-N-acetyl-alpha-D-glucosamine biosynthesis; N-acetyl-alpha-D-glucosamine 1-phosphate from alpha-D-glucosamine 6-phosphate (route II): step 2/2. It participates in nucleotide-sugar biosynthesis; UDP-N-acetyl-alpha-D-glucosamine biosynthesis; UDP-N-acetyl-alpha-D-glucosamine from N-acetyl-alpha-D-glucosamine 1-phosphate: step 1/1. It functions in the pathway bacterial outer membrane biogenesis; LPS lipid A biosynthesis. Functionally, catalyzes the last two sequential reactions in the de novo biosynthetic pathway for UDP-N-acetylglucosamine (UDP-GlcNAc). The C-terminal domain catalyzes the transfer of acetyl group from acetyl coenzyme A to glucosamine-1-phosphate (GlcN-1-P) to produce N-acetylglucosamine-1-phosphate (GlcNAc-1-P), which is converted into UDP-GlcNAc by the transfer of uridine 5-monophosphate (from uridine 5-triphosphate), a reaction catalyzed by the N-terminal domain. The protein is Bifunctional protein GlmU of Staphylococcus epidermidis.